We begin with the raw amino-acid sequence, 330 residues long: Glycerol-3-phosphate dehydrogenase [NAD(P)+] (330 aa).

The NADPH site is built by tryptophan 11, arginine 33, and lysine 105. Residues lysine 105, glycine 133, and serine 135 each coordinate sn-glycerol 3-phosphate. Alanine 137 is a binding site for NADPH. Residues lysine 188, aspartate 241, serine 251, arginine 252, and asparagine 253 each contribute to the sn-glycerol 3-phosphate site. Catalysis depends on lysine 188, which acts as the Proton acceptor. Arginine 252 provides a ligand contact to NADPH. Residues valine 276 and glutamate 278 each contribute to the NADPH site.

This sequence belongs to the NAD-dependent glycerol-3-phosphate dehydrogenase family.

The protein resides in the cytoplasm. It catalyses the reaction sn-glycerol 3-phosphate + NAD(+) = dihydroxyacetone phosphate + NADH + H(+). It carries out the reaction sn-glycerol 3-phosphate + NADP(+) = dihydroxyacetone phosphate + NADPH + H(+). Its pathway is membrane lipid metabolism; glycerophospholipid metabolism. In terms of biological role, catalyzes the reduction of the glycolytic intermediate dihydroxyacetone phosphate (DHAP) to sn-glycerol 3-phosphate (G3P), the key precursor for phospholipid synthesis. This chain is Glycerol-3-phosphate dehydrogenase [NAD(P)+], found in Acidovorax ebreus (strain TPSY) (Diaphorobacter sp. (strain TPSY)).